Here is a 206-residue protein sequence, read N- to C-terminus: uncharacterized protein (206 aa).

The first 18 residues, 1–18, serve as a signal peptide directing secretion; that stretch reads MKTYSLLLGLFISFGVLA.

This is an uncharacterized protein from Haemophilus influenzae (strain ATCC 51907 / DSM 11121 / KW20 / Rd).